The sequence spans 347 residues: Phosphoribosylformylglycinamidine cyclo-ligase (347 aa).

Belongs to the AIR synthase family.

The protein resides in the cytoplasm. It catalyses the reaction 2-formamido-N(1)-(5-O-phospho-beta-D-ribosyl)acetamidine + ATP = 5-amino-1-(5-phospho-beta-D-ribosyl)imidazole + ADP + phosphate + H(+). It functions in the pathway purine metabolism; IMP biosynthesis via de novo pathway; 5-amino-1-(5-phospho-D-ribosyl)imidazole from N(2)-formyl-N(1)-(5-phospho-D-ribosyl)glycinamide: step 2/2. The protein is Phosphoribosylformylglycinamidine cyclo-ligase of Alkalilimnicola ehrlichii (strain ATCC BAA-1101 / DSM 17681 / MLHE-1).